The sequence spans 594 residues: Solute carrier family 13 member 1 (594 aa).

Transmembrane regions (helical) follow at residues 13–33, 40–60, 77–97, 113–133, and 134–154; these read FLLVVFTILVFLPLPLIIRTK, ILFVIAIFWITEALPLSITAL, VASAYFKDFHLLLIGVICLAT, VMMVGVNPAWLTLGFMSSTAF, and LSMWLSNTSTAAMVMPIVEAV. An N-linked (GlcNAc...) asparagine glycan is attached at asparagine 174. The segment covering 192–220 has biased composition (basic and acidic residues); sequence TNEKKEKTKPAPGSSHDKGKVSRKMETEK. The segment at 192–226 is disordered; it reads TNEKKEKTKPAPGSSHDKGKVSRKMETEKNAVTGA. Helical transmembrane passes span 239-259, 283-303, 347-367, 380-400, 461-481, 487-507, 511-531, and 552-572; these read LMCLSVAYSSTIGGLTTITGT, SWFLFSFPVALILLLLSWIWL, IVTLVIFIVMALLWFSRDPGF, GYVTDSTVALVAGILFFLIPA, LSPLGSLPVWLIILISSLIVT, ASNPATITILFPILSPLAEAI, PLQILLPSTLCTSFAFLLPVA, and AGLGVNILGVAVVMLGMFTWI. N-linked (GlcNAc...) asparagine glycosylation occurs at asparagine 590.

This sequence belongs to the SLC13A/DASS transporter (TC 2.A.47) family. NADC subfamily. In terms of tissue distribution, highly expressed in kidney and ileum, detected at lower levels in duodenum/jejunum and colon, and at very low levels in cecum, testis, adrenal and adipose tissues. Expressed in the kidney.

The protein resides in the apical cell membrane. The catalysed reaction is sulfate(out) + 3 Na(+)(out) = sulfate(in) + 3 Na(+)(in). It catalyses the reaction selenate(out) + 3 Na(+)(out) = selenate(in) + 3 Na(+)(in). The enzyme catalyses thiosulfate(out) + 3 Na(+)(out) = thiosulfate(in) + 3 Na(+)(in). In terms of biological role, sodium:sulfate symporter that mediates sulfate reabsorption in the kidney and small intestine. Can also mediate the transport of selenate and thiosulfate. The polypeptide is Solute carrier family 13 member 1 (Slc13a1) (Mus musculus (Mouse)).